Here is a 186-residue protein sequence, read N- to C-terminus: Peptidyl-tRNA hydrolase (186 aa).

Y16 lines the tRNA pocket. Residue H21 is the Proton acceptor of the active site. Residues Y66, N68, and N114 each contribute to the tRNA site.

The protein belongs to the PTH family. Monomer.

The protein localises to the cytoplasm. The enzyme catalyses an N-acyl-L-alpha-aminoacyl-tRNA + H2O = an N-acyl-L-amino acid + a tRNA + H(+). Its function is as follows. Hydrolyzes ribosome-free peptidyl-tRNAs (with 1 or more amino acids incorporated), which drop off the ribosome during protein synthesis, or as a result of ribosome stalling. Functionally, catalyzes the release of premature peptidyl moieties from peptidyl-tRNA molecules trapped in stalled 50S ribosomal subunits, and thus maintains levels of free tRNAs and 50S ribosomes. The protein is Peptidyl-tRNA hydrolase of Ureaplasma urealyticum serovar 10 (strain ATCC 33699 / Western).